We begin with the raw amino-acid sequence, 201 residues long: uncharacterized protein (201 aa).

It belongs to the phosphatidylethanolamine-binding protein family.

This is an uncharacterized protein from Saccharomyces cerevisiae (strain ATCC 204508 / S288c) (Baker's yeast).